The following is a 150-amino-acid chain: Protein-arginine-phosphatase (150 aa).

The Nucleophile role is filled by C7. 8-13 (TGNTCR) is a substrate binding site. Residue R13 is part of the active site. D118 acts as the Proton donor/acceptor in catalysis.

Belongs to the low molecular weight phosphotyrosine protein phosphatase family.

The enzyme catalyses N(omega)-phospho-L-arginyl-[protein] + H2O = L-arginyl-[protein] + phosphate. Efficiently inhibited by Cu(2+) ion, Zn(2+) ion, sodium pyrophosphate and N-ethylmaleimide, while the addition of Mg(2+), Ca(2+) or Fe(3+) ions has minimal effect. Inhibited in a competitive manner by vanadate. In terms of biological role, catalyzes the specific dephosphorylation of phosphoarginine residues in a large number of proteins. Counteracts the protein arginine kinase McsB in vivo. Can dephosphorylate CtsR-P; thus, can restore the DNA-binding ability of the CtsR repressor by reversing the McsB-mediated phosphorylation. Is the only active pArg phosphatase present in B.subtilis. Exhibits almost no activity against pSer, pThr, or pTyr peptides. Appears to play a role in B.subtilis stress resistance. Protein arginine phosphorylation has a physiologically important role and is involved in the regulation of many critical cellular processes, such as protein homeostasis, motility, competence, and stringent and stress responses, by regulating gene expression and protein activity. The polypeptide is Protein-arginine-phosphatase (ywlE) (Bacillus subtilis (strain 168)).